We begin with the raw amino-acid sequence, 331 residues long: N-arachidonyl glycine receptor (331 aa).

The Extracellular portion of the chain corresponds to 1–26 (MITLNNQDQPVPFNNSYPDEYEIAAL). Residue N14 is glycosylated (N-linked (GlcNAc...) asparagine). The helical transmembrane segment at 27–47 (VFYSCIFIIGLFVNITALWVF) threads the bilayer. Topologically, residues 48–56 (SCTTKKRTT) are cytoplasmic. Residues 57 to 77 (VTIYMMNVALVDLIFIMTLPF) traverse the membrane as a helical segment. Residues 78–95 (RMFYYAKDEWPFGEYFCQ) are Extracellular-facing. A disulfide bond links C94 and C172. Residues 96–116 (ILGALTVFYPSIALWLLAFIS) traverse the membrane as a helical segment. The Cytoplasmic portion of the chain corresponds to 117-138 (ADRYMAIVQPKYAKELKNTCKA). The helical transmembrane segment at 139–159 (VLACVGVWIMTLTTTIPLLLL) threads the bilayer. Topologically, residues 160 to 191 (HKDPDKDSTPATCLKISDIVYLKAVNVLNFTR) are extracellular. N188 is a glycosylation site (N-linked (GlcNAc...) asparagine). Residues 192–212 (LTFFFLIPLFIMIGCYLVIIH) form a helical membrane-spanning segment. Residues 213 to 232 (NLLHGRTSKLKPKVKEKSIR) are Cytoplasmic-facing. Residues 233-253 (IIITLLVQVLVCFMPFHICFA) form a helical membrane-spanning segment. The Extracellular portion of the chain corresponds to 254–268 (FLMLGTGENSYSPWG). The chain crosses the membrane as a helical span at residues 269-289 (AFTTFLMNLSTCLDVILYYIV). At 290 to 331 (SKQFQARVISVMLYRNYLRGMRRKSFRSGSLRSLSNINSEML) the chain is on the cytoplasmic side. S322 bears the Phosphoserine mark.

The protein belongs to the G-protein coupled receptor 1 family.

The protein resides in the cell membrane. Its subcellular location is the cytoplasmic vesicle membrane. In terms of biological role, g protein-coupled receptor (GPCR) that plays a role in diverse physiological processes particularly within the immune and nervous systems. Becomes active when triggered by various endogenous ligands including endocannabinoid N-arachidonyl glycine (NAGly), delta-9-tetrahydrocannabinol or resolvin D2/RvD2 derived from the omega-3 fatty acid docosahexaenoic acid (DHA). Upon RvD2 binding, facilitates the resolution of inflammation, aiding in tissue repair and homeostasis. Mechanistically, RvD2 ligation initiates Galphas protein coupling, activation of cAMP-PKA signaling pathway and phosphorylation of STAT3, leading to RvD2-stimulated macrophage phagocytosis. Mediates NAGly-induced process of reorganization of actin filaments and induction of acrosomal exocytosis. Activation by N-arachidonoyl glycine (NAGly) can also induce apoptosis in macrophages. Plays a role in homeostasis of CD8+ subsets of intraepithelial lymphocytes (IELs) (CD8alphaalpha and CD8alphabeta IELs) in small intestine by supporting preferential migration of CD8alphaalpha T-cells to intraepithelial compartment over lamina propria compartment, and by mediating their reconstitution into small intestine after bone marrow transplant. Participates also in hypotensive responses, mediating reduction in intraocular and blood pressure. The polypeptide is N-arachidonyl glycine receptor (Macaca fascicularis (Crab-eating macaque)).